A 311-amino-acid chain; its full sequence is Methionyl-tRNA formyltransferase (311 aa).

110 to 113 (SLLP) provides a ligand contact to (6S)-5,6,7,8-tetrahydrofolate.

The protein belongs to the Fmt family.

The enzyme catalyses L-methionyl-tRNA(fMet) + (6R)-10-formyltetrahydrofolate = N-formyl-L-methionyl-tRNA(fMet) + (6S)-5,6,7,8-tetrahydrofolate + H(+). In terms of biological role, attaches a formyl group to the free amino group of methionyl-tRNA(fMet). The formyl group appears to play a dual role in the initiator identity of N-formylmethionyl-tRNA by promoting its recognition by IF2 and preventing the misappropriation of this tRNA by the elongation apparatus. This is Methionyl-tRNA formyltransferase from Streptococcus pyogenes serotype M3 (strain ATCC BAA-595 / MGAS315).